The following is a 282-amino-acid chain: HTH-type transcriptional activator RhaR (282 aa).

Residues 179–277 form the HTH araC/xylS-type domain; it reads DKLITALANS…GMTPSQWRHL (99 aa). DNA-binding regions (H-T-H motif) lie at residues 196 to 217 and 244 to 267; these read DAFC…RAQT and ISEI…TRET.

As to quaternary structure, binds DNA as a dimer.

Its subcellular location is the cytoplasm. Activates expression of the rhaSR operon in response to L-rhamnose. The protein is HTH-type transcriptional activator RhaR of Salmonella schwarzengrund (strain CVM19633).